A 280-amino-acid polypeptide reads, in one-letter code: Elongation factor Ts (280 aa).

An involved in Mg(2+) ion dislocation from EF-Tu region spans residues 82–85 (TDFV).

The protein belongs to the EF-Ts family.

The protein resides in the cytoplasm. Associates with the EF-Tu.GDP complex and induces the exchange of GDP to GTP. It remains bound to the aminoacyl-tRNA.EF-Tu.GTP complex up to the GTP hydrolysis stage on the ribosome. This Baumannia cicadellinicola subsp. Homalodisca coagulata protein is Elongation factor Ts.